The sequence spans 739 residues: Pre-mRNA-splicing factor ATP-dependent RNA helicase ddx-15 (739 aa).

A compositionally biased stretch (basic and acidic residues) spans 1 to 19 (MSSRHRLDLDGSGRGDRRR). The segment at 1 to 49 (MSSRHRLDLDGSGRGDRRRSPNRRSRSRSRSPHRRSSPDRKRQIGAVGN) is disordered. The span at 20–35 (SPNRRSRSRSRSPHRR) shows a compositional bias: basic residues. A Helicase ATP-binding domain is found at 86-257 (MELLRNNQCI…FEDCPLLSVP (172 aa)). 99 to 106 (GETGSGKT) is an ATP binding site. A DEAH box motif is present at residues 204–207 (DEAH). The Helicase C-terminal domain maps to 282–462 (TVIQIHMVEE…SVVLQLKKLG (181 aa)).

The protein belongs to the DEAD box helicase family. DEAH subfamily. DDX15/PRP43 sub-subfamily.

The protein localises to the nucleus. The enzyme catalyses ATP + H2O = ADP + phosphate + H(+). In terms of biological role, pre-mRNA processing factor involved in disassembly of spliceosomes after the release of mature mRNA. This is Pre-mRNA-splicing factor ATP-dependent RNA helicase ddx-15 from Caenorhabditis elegans.